The primary structure comprises 458 residues: Tetratricopeptide repeat protein 23-like (458 aa).

Coiled-coil stretches lie at residues Gly175–Gly198 and Thr246–Ser278.

It is found in the cytoplasm. It localises to the cytoskeleton. Its subcellular location is the microtubule organizing center. The protein localises to the centrosome. The protein resides in the spindle. It is found in the midbody. This Mus musculus (Mouse) protein is Tetratricopeptide repeat protein 23-like (Ttc23l).